A 118-amino-acid polypeptide reads, in one-letter code: Large ribosomal subunit protein uL22 (118 aa).

Belongs to the universal ribosomal protein uL22 family. As to quaternary structure, part of the 50S ribosomal subunit.

In terms of biological role, this protein binds specifically to 23S rRNA; its binding is stimulated by other ribosomal proteins, e.g. L4, L17, and L20. It is important during the early stages of 50S assembly. It makes multiple contacts with different domains of the 23S rRNA in the assembled 50S subunit and ribosome. Its function is as follows. The globular domain of the protein is located near the polypeptide exit tunnel on the outside of the subunit, while an extended beta-hairpin is found that lines the wall of the exit tunnel in the center of the 70S ribosome. The polypeptide is Large ribosomal subunit protein uL22 (Listeria innocua serovar 6a (strain ATCC BAA-680 / CLIP 11262)).